The sequence spans 475 residues: Arginine/ornithine antiporter (475 aa).

Helical transmembrane passes span 10–30, 42–62, 74–94, 101–121, 157–177, 205–225, 238–258, 283–303, 333–353, 361–381, 397–417, and 451–471; these read IGLLALIALVISSSIGSGVFG, GPVLIAWVIVGFGILMLALSL, GIFSYAEKGFGPFAGFISGWG, LGNVTFATILMSALGYFFPIF, LVTICKLIPLFVFIIFGIVLF, NCMMVMMWVFVGIEGASMLSA, ILGLVSLLAIYILASVLPYGY, WGGYFIGVGLIISILGAWLSW, PTFALVVTAGLIQVFLFTLLF, AYSLCTASIIVCYMLVAAYQI, LLIGVLALLFEIAGILMAGVS, and WLITTIIVIGAIIGIWLVVSG.

Belongs to the amino acid-polyamine-organocation (APC) superfamily. Basic amino acid/polyamine antiporter (APA) (TC 2.A.3.2) family.

The protein resides in the cell membrane. It carries out the reaction L-ornithine(in) + L-arginine(out) = L-ornithine(out) + L-arginine(in). Functionally, catalyzes electroneutral exchange between L-arginine and L-ornithine. The polypeptide is Arginine/ornithine antiporter (arcD) (Latilactobacillus sakei (Lactobacillus sakei)).